The chain runs to 118 residues: Holo-[acyl-carrier-protein] synthase (118 aa).

Mg(2+) is bound by residues D9 and E52.

The protein belongs to the P-Pant transferase superfamily. AcpS family. The cofactor is Mg(2+).

The protein resides in the cytoplasm. The catalysed reaction is apo-[ACP] + CoA = holo-[ACP] + adenosine 3',5'-bisphosphate + H(+). Its function is as follows. Transfers the 4'-phosphopantetheine moiety from coenzyme A to a Ser of acyl-carrier-protein. The polypeptide is Holo-[acyl-carrier-protein] synthase (Frankia alni (strain DSM 45986 / CECT 9034 / ACN14a)).